Reading from the N-terminus, the 526-residue chain is Peptide chain release factor 3 (526 aa).

The tr-type G domain maps to 9 to 277; that stretch reads NKRRTFAIIS…DFVEYAPGPQ (269 aa). GTP-binding positions include 18 to 25, 86 to 90, and 140 to 143; these read SHPDAGKT, DTPGH, and NKLD.

The protein belongs to the TRAFAC class translation factor GTPase superfamily. Classic translation factor GTPase family. PrfC subfamily.

The protein localises to the cytoplasm. In terms of biological role, increases the formation of ribosomal termination complexes and stimulates activities of RF-1 and RF-2. It binds guanine nucleotides and has strong preference for UGA stop codons. It may interact directly with the ribosome. The stimulation of RF-1 and RF-2 is significantly reduced by GTP and GDP, but not by GMP. The polypeptide is Peptide chain release factor 3 (Legionella pneumophila (strain Paris)).